Reading from the N-terminus, the 132-residue chain is Small ribosomal subunit protein uS9 (132 aa).

It belongs to the universal ribosomal protein uS9 family.

The polypeptide is Small ribosomal subunit protein uS9 (Baumannia cicadellinicola subsp. Homalodisca coagulata).